A 411-amino-acid chain; its full sequence is MGLKNLFEKMEPAFLPGGKYSKLYPIFESIYTLLYTPGTVTHKNTHVRDALDSKRMMITVFLALFPAIFYGMYNVGNQAIPALNQLGNLDQLIANDWHYALASSLGLDLTANATWGSKMALGAIFFLPIYLVVFTVCTIWELLFSVVRGHEVNEGMFVSTILFALIVPPTLPLWQAALGITFGIIVAKEIFGGVGRNFMNPALAGRAFLFFAYPAQISGDTVWTAADGFSGATALSQWSQGGQGALQHTVTGAPITWMDAFVGNLPGSMGEVSTLAILIGGAVIVFTRIAAWRIIAGVMIGMIATSTLFNLIGSETNPMFSMPWHWHFVLGGFALGMVFMATDPVSASFTNTGKWWYGALIGVMAVLIRTVNPAYPEGMMLAILFANLFAPIFDYIVVQANIKRRRARTNG.

3 helical membrane passes run 56-76 (MMIT…YNVG), 120-140 (ALGA…CTIW), and 166-186 (IVPP…GIIV). At Thr-233 the chain carries FMN phosphoryl threonine. Helical transmembrane passes span 272–292 (VSTL…IAAW), 294–314 (IIAG…LIGS), 319–339 (MFSM…GMVF), 348–368 (SFTN…AVLI), and 378–398 (GMML…YIVV).

Belongs to the NqrB/RnfD family. As to quaternary structure, composed of six subunits; NqrA, NqrB, NqrC, NqrD, NqrE and NqrF. It depends on FMN as a cofactor.

The protein localises to the cell inner membrane. The enzyme catalyses a ubiquinone + n Na(+)(in) + NADH + H(+) = a ubiquinol + n Na(+)(out) + NAD(+). Functionally, NQR complex catalyzes the reduction of ubiquinone-1 to ubiquinol by two successive reactions, coupled with the transport of Na(+) ions from the cytoplasm to the periplasm. NqrA to NqrE are probably involved in the second step, the conversion of ubisemiquinone to ubiquinol. This is Na(+)-translocating NADH-quinone reductase subunit B from Haemophilus influenzae (strain 86-028NP).